A 294-amino-acid polypeptide reads, in one-letter code: 33 kDa chaperonin (294 aa).

Intrachain disulfides connect Cys-238–Cys-240 and Cys-271–Cys-274.

Belongs to the HSP33 family. Post-translationally, under oxidizing conditions two disulfide bonds are formed involving the reactive cysteines. Under reducing conditions zinc is bound to the reactive cysteines and the protein is inactive.

The protein resides in the cytoplasm. Functionally, redox regulated molecular chaperone. Protects both thermally unfolding and oxidatively damaged proteins from irreversible aggregation. Plays an important role in the bacterial defense system toward oxidative stress. The sequence is that of 33 kDa chaperonin from Staphylococcus haemolyticus (strain JCSC1435).